A 381-amino-acid chain; its full sequence is Terpene cyclase ATR13 (381 aa).

The protein belongs to the terpene synthase family.

Its pathway is mycotoxin biosynthesis. Terpene cyclase; part of the core atranone cluster (CAC) which products are predicted to catalyze most or all steps of mycotoxin atranone synthesis, starting from geranylgeranyl pyrophosphate (GGPP). The initial cyclization of GGPP to dolabellane is probably performed by the terpene cyclase ATR13. The Baeyer-Villiger oxidation near the end of the atranone synthesis, which converts atranones D and E to atranones F and G is predicted to be catalyzed by the monooxygenase ATR8. Of the CAC's other predicted gene products, the reducing PKS ATR6 might synthesize a polyketide chain. This polyketide is probably transferred onto the atranone backbone by the polyketide transferase ATR5. Other predicted CAC products include 4 oxygenases (ATR2, ATR3, ATR4, and ATR14), 3 short-chain reductases (ATR7, ATR9, and ATR10), and a methyltransferase (ATR12). These may all be involved in the various steps of atranone biosynthesis, although their specific roles must await experimental determination. This is Terpene cyclase ATR13 from Stachybotrys chlorohalonatus (strain IBT 40285).